The primary structure comprises 83 residues: Erabutoxin b (83 aa).

Positions Met-1–Thr-21 are cleaved as a signal peptide. The loop I stretch occupies residues Cys-24–Cys-38. Disulfide bonds link Cys-24–Cys-45, Cys-38–Cys-62, Cys-64–Cys-75, and Cys-76–Cys-81. A stretch between loop I and loop II region spans residues Ser-39–Ser-44. The interval Cys-45 to Cys-62 is loop II. The interval Cys-64–Cys-75 is loop III.

Belongs to the three-finger toxin family. Short-chain subfamily. Type I alpha-neurotoxin sub-subfamily. In terms of tissue distribution, expressed by the venom gland.

The protein resides in the secreted. Functionally, binds with high affinity to muscular nicotinic acetylcholine receptors (nAChRs) (tested on Torpedo marmorata, Kd=0.07 nM), and with low affinity to neuronal alpha-7/CHRNA7 nAChRs (tested on chimeric alpha-7/CHRNA7, Kd=22 uM) and inhibit acetylcholine from binding to the receptor, thereby impairing neuromuscular transmission. Produces peripheral paralysis by blocking neuromuscular transmission at the postsynaptic site. The sequence is that of Erabutoxin b from Laticauda semifasciata (Black-banded sea krait).